The following is a 354-amino-acid chain: Guanine nucleotide-binding protein G(i) subunit alpha-3 (354 aa).

Gly2 carries the N-myristoyl glycine lipid modification. Cys3 is lipidated: S-palmitoyl cysteine. A G-alpha domain is found at 32 to 354; it reads KEVKLLLLGA…KNNLKECGLY (323 aa). The tract at residues 35 to 48 is G1 motif; that stretch reads KLLLLGAGESGKST. Positions 42, 43, 44, 45, 46, 47, 48, 150, 151, 175, 176, 177, 178, 179, 180, 181, 201, 203, 269, 270, 272, 273, 325, 326, and 327 each coordinate GTP. Ser47 is a binding site for Mg(2+). Residues 173-181 are G2 motif; it reads DVLRTRVKT. Thr181 provides a ligand contact to Mg(2+). Residues 196–205 are G3 motif; the sequence is FKMFDVGGQR. The segment at 265-272 is G4 motif; the sequence is ILFLNKKD. The segment at 324–329 is G5 motif; sequence TCATDT.

The protein belongs to the G-alpha family. G(i/o/t/z) subfamily. Heterotrimeric G proteins are composed of 3 units; alpha, beta and gamma. The alpha subunit contains the guanine nucleotide binding site. GTP binding causes dissociation of the heterotrimer, liberating the individual subunits so that they can interact with downstream effector proteins. Forms a complex with CCDC88A/GIV and EGFR which leads to enhanced EGFR signaling and triggering of cell migration; ligand stimulation is required for recruitment of GNAI3 to the complex. Interacts (inactive GDP-bound form) with CCDC88A/GIV (via GBA motif); the interaction leads to activation of GNAI3. Interacts (inactive GDP-bound form) with CCDC88C/DAPLE (via GBA motif); the interaction leads to activation of GNAI3. Interacts (inactive GDP-bound form) with NUCB1 (via GBA motif) and NUCB2 (via GBA motif); the interaction leads to activation of GNAI3. Interacts (inactive GDP-bound form) with PLCD4 (via GBA motif); the interaction leads to activation of GNAI3. Interacts with INSR; the interaction is probably mediated by CCDC88A/GIV. Interacts with GPSM1. Interacts (GDP-bound form) with GPSM2 (via GoLoco domains). Does not interact with RGS2. Interacts with RGS8 and RGS10; this strongly enhances the intrinsic GTPase activity. Interacts with RGS12. Interacts with RGS16; this strongly enhances the intrinsic GTPase activity. Interacts (via active GTP- or inactive GDP-bound form) with RGS14. Interacts (via active GTP-bound form) with TRPC5 (via ANK repeats) in a homotetrameric ion channel; the interaction is direct and activates the channel activity. In terms of tissue distribution, ubiquitous.

It localises to the cytoplasm. The protein localises to the cell membrane. Its subcellular location is the cytoskeleton. It is found in the microtubule organizing center. The protein resides in the centrosome. Functionally, heterotrimeric guanine nucleotide-binding proteins (G proteins) function as transducers downstream of G protein-coupled receptors (GPCRs) in numerous signaling cascades. The alpha chain contains the guanine nucleotide binding site and alternates between an active, GTP-bound state and an inactive, GDP-bound state. Signaling by an activated GPCR promotes GDP release and GTP binding. The alpha subunit has a low GTPase activity that converts bound GTP to GDP, thereby terminating the signal. Both GDP release and GTP hydrolysis are modulated by numerous regulatory proteins. Signaling is mediated via effector proteins, such as adenylate cyclase. Inhibits adenylate cyclase activity, leading to decreased intracellular cAMP levels. Stimulates the activity of receptor-regulated K(+) channels. The active GTP-bound form prevents the association of RGS14 with centrosomes and is required for the translocation of RGS14 from the cytoplasm to the plasma membrane. May play a role in cell division. The active GTP-bound form activates the calcium permeant TRPC5 ion channels. The sequence is that of Guanine nucleotide-binding protein G(i) subunit alpha-3 (Gnai3) from Rattus norvegicus (Rat).